The following is an 897-amino-acid chain: Zinc finger protein zas1 (897 aa).

2 C2H2-type zinc fingers span residues 26-50 (FYCTYPDCPKSFTRKEHLRRHERTH) and 56-79 (FSCSFCNRAFARSDVLNRHVQQMH). A C2H2-type 3; atypical zinc finger spans residues 93-119 (ASCFLGFCVLAHDYVNLINARHFMIEH).

It localises to the nucleus. The chain is Zinc finger protein zas1 (zas1) from Schizosaccharomyces pombe (strain 972 / ATCC 24843) (Fission yeast).